Consider the following 188-residue polypeptide: Ribosome maturation factor RimM (188 aa).

Positions 96-169 (DDEFYYADLE…RILIDPMAAG (74 aa)) constitute a PRC barrel domain.

The protein belongs to the RimM family. In terms of assembly, binds ribosomal protein uS19.

The protein localises to the cytoplasm. Functionally, an accessory protein needed during the final step in the assembly of 30S ribosomal subunit, possibly for assembly of the head region. Essential for efficient processing of 16S rRNA. May be needed both before and after RbfA during the maturation of 16S rRNA. It has affinity for free ribosomal 30S subunits but not for 70S ribosomes. In Agrobacterium fabrum (strain C58 / ATCC 33970) (Agrobacterium tumefaciens (strain C58)), this protein is Ribosome maturation factor RimM.